A 127-amino-acid chain; its full sequence is KP4 killer toxin (127 aa).

Positions 1 to 22 (MQIINVVYSFLFAAAMLPVVHS) are cleaved as a signal peptide. Disulfide bonds link C27/C100, C33/C103, C49/C89, C57/C82, and C66/C127.

In terms of assembly, monomer.

The protein resides in the secreted. In terms of biological role, this protein is lethal to sensitive cells of the same or related species. It specifically inhibits voltage-gated calcium channels. It inhibits cell growth and division by blocking calcium import. This Mycosarcoma maydis (Corn smut fungus) protein is KP4 killer toxin (M2A).